Here is a 33-residue protein sequence, read N- to C-terminus: MSDIN-like toxin proprotein 1 (33 aa).

Residues 1-10 (MSDINATRLP) constitute a propeptide that is removed on maturation. A cross-link (cyclopeptide (Ile-Pro)) is located at residues 11–18 (IIWAPVVP). The propeptide occupies 19-33 (CISDDNDSTLTRGQR).

This sequence belongs to the MSDIN fungal toxin family. In terms of processing, processed by the macrocyclase-peptidase enzyme POPB to yield a toxic cyclic octapeptide. POPB first removes 10 residues from the N-terminus. Conformational trapping of the remaining peptide forces the enzyme to release this intermediate rather than proceed to macrocyclization. The enzyme rebinds the remaining peptide in a different conformation and catalyzes macrocyclization of the N-terminal 8 residues.

In terms of biological role, probable toxin that belongs to the MSDIN-like toxin family responsible for a large number of food poisoning cases and deaths. The chain is MSDIN-like toxin proprotein 1 from Amanita fuliginea (East Asian brown death cap).